A 192-amino-acid chain; its full sequence is Putative acetyltransferase SH0499 (192 aa).

This sequence belongs to the transferase hexapeptide repeat family.

The polypeptide is Putative acetyltransferase SH0499 (Staphylococcus haemolyticus (strain JCSC1435)).